The primary structure comprises 380 residues: Cytochrome b (380 aa).

4 helical membrane-spanning segments follow: residues 34–54 (FGSL…LLAM), 78–99 (WLIR…YLHI), 114–134 (WNTG…GYVL), and 179–199 (FFAL…IHLT). The heme b site is built by His-84 and His-98. Heme b is bound by residues His-183 and His-197. An a ubiquinone-binding site is contributed by His-202. Helical transmembrane passes span 227–247 (TKDI…ALFS), 289–309 (LGGV…PLLH), 321–341 (LSQL…WIGS), and 348–368 (FIII…ILFP).

Belongs to the cytochrome b family. As to quaternary structure, the cytochrome bc1 complex contains 11 subunits: 3 respiratory subunits (MT-CYB, CYC1 and UQCRFS1), 2 core proteins (UQCRC1 and UQCRC2) and 6 low-molecular weight proteins (UQCRH/QCR6, UQCRB/QCR7, UQCRQ/QCR8, UQCR10/QCR9, UQCR11/QCR10 and a cleavage product of UQCRFS1). This cytochrome bc1 complex then forms a dimer. It depends on heme b as a cofactor.

The protein localises to the mitochondrion inner membrane. In terms of biological role, component of the ubiquinol-cytochrome c reductase complex (complex III or cytochrome b-c1 complex) that is part of the mitochondrial respiratory chain. The b-c1 complex mediates electron transfer from ubiquinol to cytochrome c. Contributes to the generation of a proton gradient across the mitochondrial membrane that is then used for ATP synthesis. This Pygoscelis antarcticus (Chinstrap penguin) protein is Cytochrome b (MT-CYB).